We begin with the raw amino-acid sequence, 590 residues long: Fucose-1-phosphate guanylyltransferase (590 aa).

As to expression, expressed at highest levels in brain, moderately in testis, ovary and kidney, and weakly in liver, spleen, heart and lung.

It is found in the cytoplasm. The catalysed reaction is beta-L-fucose 1-phosphate + GTP + H(+) = GDP-beta-L-fucose + diphosphate. In terms of biological role, catalyzes the formation of GDP-L-fucose from GTP and L-fucose-1-phosphate. Functions as a salvage pathway to reutilize L-fucose arising from the turnover of glycoproteins and glycolipids. This is Fucose-1-phosphate guanylyltransferase from Mus musculus (Mouse).